The sequence spans 336 residues: NADH-quinone oxidoreductase subunit H (336 aa).

Transmembrane regions (helical) follow at residues 9–29, 77–97, 116–136, 156–176, 188–208, 236–256, 275–295, and 315–335; these read LVWI…LTYA, FLFA…VIPF, LGVM…IIAG, ISYE…TGSL, LPYW…VSIL, IPFA…SSIM, IVPG…CFLI, and VFLP…AFNI.

It belongs to the complex I subunit 1 family. As to quaternary structure, NDH-1 is composed of 14 different subunits. Subunits NuoA, H, J, K, L, M, N constitute the membrane sector of the complex.

The protein localises to the cell inner membrane. The enzyme catalyses a quinone + NADH + 5 H(+)(in) = a quinol + NAD(+) + 4 H(+)(out). In terms of biological role, NDH-1 shuttles electrons from NADH, via FMN and iron-sulfur (Fe-S) centers, to quinones in the respiratory chain. The immediate electron acceptor for the enzyme in this species is believed to be ubiquinone. Couples the redox reaction to proton translocation (for every two electrons transferred, four hydrogen ions are translocated across the cytoplasmic membrane), and thus conserves the redox energy in a proton gradient. This subunit may bind ubiquinone. The polypeptide is NADH-quinone oxidoreductase subunit H (Neorickettsia sennetsu (strain ATCC VR-367 / Miyayama) (Ehrlichia sennetsu)).